Reading from the N-terminus, the 412-residue chain is Aspartate aminotransferase, cytoplasmic (412 aa).

Ala-2 carries the N-acetylalanine modification. L-aspartate is bound by residues Gly-38, Trp-140, and Asn-194. Lys-258 is modified (N6-(pyridoxal phosphate)lysine). Position 386 (Arg-386) interacts with L-aspartate.

It belongs to the class-I pyridoxal-phosphate-dependent aminotransferase family. As to quaternary structure, homodimer. It depends on pyridoxal 5'-phosphate as a cofactor.

It is found in the cytoplasm. The enzyme catalyses L-aspartate + 2-oxoglutarate = oxaloacetate + L-glutamate. The catalysed reaction is L-cysteine + 2-oxoglutarate = 2-oxo-3-sulfanylpropanoate + L-glutamate. It carries out the reaction (2S)-2-aminobutanoate + 2-oxoglutarate = 2-oxobutanoate + L-glutamate. It catalyses the reaction 3-sulfino-L-alanine + 2-oxoglutarate = 3-sulfinopyruvate + L-glutamate. In terms of biological role, biosynthesis of L-glutamate from L-aspartate or L-cysteine. Important regulator of levels of glutamate, the major excitatory neurotransmitter of the vertebrate central nervous system. Acts as a scavenger of glutamate in brain neuroprotection. The aspartate aminotransferase activity is involved in hepatic glucose synthesis during development and in adipocyte glyceroneogenesis. Using L-cysteine as substrate, regulates levels of mercaptopyruvate, an important source of hydrogen sulfide. Mercaptopyruvate is converted into H(2)S via the action of 3-mercaptopyruvate sulfurtransferase (3MST). Hydrogen sulfide is an important synaptic modulator and neuroprotectant in the brain. This chain is Aspartate aminotransferase, cytoplasmic, found in Gallus gallus (Chicken).